The primary structure comprises 440 residues: Probable cytosolic iron-sulfur protein assembly protein 1 (440 aa).

7 WD repeats span residues 12–51 (AHAE…SSDG), 71–110 (DHKR…SDDE), 148–187 (GHES…DFEC), 193–233 (EHSQ…WCIF), 278–317 (EEDE…PDSA), 326–379 (AHSR…SPSS), and 401–440 (HGVN…VVRD). Residues 107–116 (SDDEEEEDEG) are compositionally biased toward acidic residues. The segment at 107 to 137 (SDDEEEEDEGAQGVYKPAGVDSDGDGDGGKE) is disordered.

It belongs to the WD repeat CIA1 family.

Essential component of the cytosolic iron-sulfur (Fe/S) protein assembly machinery. Required for the maturation of extramitochondrial Fe/S proteins. The sequence is that of Probable cytosolic iron-sulfur protein assembly protein 1 from Cryptococcus neoformans var. neoformans serotype D (strain B-3501A) (Filobasidiella neoformans).